The primary structure comprises 288 residues: Elongation factor Ts (288 aa).

The interval 80–83 (TDFL) is involved in Mg(2+) ion dislocation from EF-Tu.

The protein belongs to the EF-Ts family.

It localises to the cytoplasm. Functionally, associates with the EF-Tu.GDP complex and induces the exchange of GDP to GTP. It remains bound to the aminoacyl-tRNA.EF-Tu.GTP complex up to the GTP hydrolysis stage on the ribosome. The chain is Elongation factor Ts from Pseudomonas fluorescens (strain ATCC BAA-477 / NRRL B-23932 / Pf-5).